The sequence spans 153 residues: Large ribosomal subunit protein uL30 (153 aa).

The protein belongs to the universal ribosomal protein uL30 family. As to quaternary structure, part of the 50S ribosomal subunit.

The sequence is that of Large ribosomal subunit protein uL30 from Methanocella arvoryzae (strain DSM 22066 / NBRC 105507 / MRE50).